Reading from the N-terminus, the 906-residue chain is Coatomer subunit beta' (906 aa).

WD repeat units follow at residues 13-52 (ARSDRVKSVDLHPTEPWMLASLYNGSVCVWNHETQTLVKT), 55-94 (VCDLPVRAAKFVARKNWVVTGADDMQIRVFNYNTLERVHM), 97-136 (AHSDYIRCIAVHPTQPFILTSSDDMLIKLWDWDKKWSCSQ), 140-180 (GHTH…PNFT), 183-224 (GHEK…CVQT), and 227-266 (GHAQNVSCASFHPELPIIITGSEDGTVRIWHSSTYRLEST). The residue at position 627 (Lys627) is an N6-acetyllysine. The interval 837 to 870 (EEGKDFQPSRSTAQQELDGKPASPTPVIVASHTA) is disordered. A Phosphoserine modification is found at Ser859. Thr861 is modified (phosphothreonine). Positions 866–891 (ASHTANKEEKSLLELEVDLDNLELED) form a coiled coil.

The protein belongs to the WD repeat COPB2 family. Oligomeric complex that consists of at least the alpha, beta, beta', gamma, delta, epsilon and zeta subunits. Probably interacts with PEX11A. Interacts with SCYL1. Interacts with JAGN1.

It localises to the cytoplasm. The protein localises to the cytosol. It is found in the golgi apparatus membrane. The protein resides in the cytoplasmic vesicle. Its subcellular location is the COPI-coated vesicle membrane. The coatomer is a cytosolic protein complex that binds to dilysine motifs and reversibly associates with Golgi non-clathrin-coated vesicles, which further mediate biosynthetic protein transport from the ER, via the Golgi up to the trans Golgi network. Coatomer complex is required for budding from Golgi membranes, and is essential for the retrograde Golgi-to-ER transport of dilysine-tagged proteins. In mammals, the coatomer can only be recruited by membranes associated to ADP-ribosylation factors (ARFs), which are small GTP-binding proteins; the complex also influences the Golgi structural integrity, as well as the processing, activity, and endocytic recycling of LDL receptors. Its function is as follows. This coatomer complex protein, essential for Golgi budding and vesicular trafficking, is a selective binding protein (RACK) for protein kinase C, epsilon type. It binds to Golgi membranes in a GTP-dependent manner. This is Coatomer subunit beta' (COPB2) from Homo sapiens (Human).